A 67-amino-acid chain; its full sequence is ATP synthase F(0) complex subunit 8 (67 aa).

Residues 8-24 (TWLIMISSMILTLFITF) traverse the membrane as a helical segment. At K54 the chain carries N6-acetyllysine; alternate. N6-succinyllysine; alternate is present on K54. An N6-acetyllysine modification is found at K57.

Belongs to the ATPase protein 8 family. As to quaternary structure, component of the ATP synthase complex composed at least of ATP5F1A/subunit alpha, ATP5F1B/subunit beta, ATP5MC1/subunit c (homooctomer), MT-ATP6/subunit a, MT-ATP8/subunit 8, ATP5ME/subunit e, ATP5MF/subunit f, ATP5MG/subunit g, ATP5MK/subunit k, ATP5MJ/subunit j, ATP5F1C/subunit gamma, ATP5F1D/subunit delta, ATP5F1E/subunit epsilon, ATP5PF/subunit F6, ATP5PB/subunit b, ATP5PD/subunit d, ATP5PO/subunit OSCP. ATP synthase complex consists of a soluble F(1) head domain (subunits alpha(3) and beta(3)) - the catalytic core - and a membrane F(0) domain - the membrane proton channel (subunits c, a, 8, e, f, g, k and j). These two domains are linked by a central stalk (subunits gamma, delta, and epsilon) rotating inside the F1 region and a stationary peripheral stalk (subunits F6, b, d, and OSCP). Interacts with PRICKLE3.

Its subcellular location is the mitochondrion membrane. Subunit 8, of the mitochondrial membrane ATP synthase complex (F(1)F(0) ATP synthase or Complex V) that produces ATP from ADP in the presence of a proton gradient across the membrane which is generated by electron transport complexes of the respiratory chain. ATP synthase complex consist of a soluble F(1) head domain - the catalytic core - and a membrane F(1) domain - the membrane proton channel. These two domains are linked by a central stalk rotating inside the F(1) region and a stationary peripheral stalk. During catalysis, ATP synthesis in the catalytic domain of F(1) is coupled via a rotary mechanism of the central stalk subunits to proton translocation. In vivo, can only synthesize ATP although its ATP hydrolase activity can be activated artificially in vitro. Part of the complex F(0) domain. The protein is ATP synthase F(0) complex subunit 8 of Halichoerus grypus (Gray seal).